Consider the following 92-residue polypeptide: Precursor of elicitor peptide 1 (92 aa).

A propeptide spanning residues 1-69 (MEKSDRRSEE…EKEEVVVTSR (69 aa)) is cleaved from the precursor. A disordered region spans residues 35 to 92 (HQDSPTTSSPGTSKQPKEEKEDVTMEKEEVVVTSRATKVKAKQRGKEKVSSGRPGQHN). A compositionally biased stretch (polar residues) spans 37-48 (DSPTTSSPGTSK). Residues 49 to 64 (QPKEEKEDVTMEKEEV) are compositionally biased toward basic and acidic residues.

The protein belongs to the brassicaceae elicitor peptide family. Interacts with its receptor PEPR1.

In terms of biological role, elicitor of plant defense. Induces the production of plant defensin (PDF1.2) and of H(2)O(2). Promotes resistance to the root fungal pathogen P.irregulare. Triggers the expression of several PROSCOOP genes (e.g. PROSCOOP2, PROSCOOP7, PROSCOOP8, PROSCOOP12 and PROSCOOP13). The sequence is that of Precursor of elicitor peptide 1 from Arabidopsis thaliana (Mouse-ear cress).